The primary structure comprises 151 residues: Methylated-DNA--protein-cysteine methyltransferase (151 aa).

Cys119 serves as the catalytic Nucleophile; methyl group acceptor.

Belongs to the MGMT family.

It localises to the cytoplasm. It carries out the reaction a 6-O-methyl-2'-deoxyguanosine in DNA + L-cysteinyl-[protein] = S-methyl-L-cysteinyl-[protein] + a 2'-deoxyguanosine in DNA. It catalyses the reaction a 4-O-methyl-thymidine in DNA + L-cysteinyl-[protein] = a thymidine in DNA + S-methyl-L-cysteinyl-[protein]. Functionally, involved in the cellular defense against the biological effects of O6-methylguanine (O6-MeG) and O4-methylthymine (O4-MeT) in DNA. Repairs the methylated nucleobase in DNA by stoichiometrically transferring the methyl group to a cysteine residue in the enzyme. This is a suicide reaction: the enzyme is irreversibly inactivated. The chain is Methylated-DNA--protein-cysteine methyltransferase from Saccharolobus islandicus (strain Y.N.15.51 / Yellowstone #2) (Sulfolobus islandicus).